A 214-amino-acid polypeptide reads, in one-letter code: ER lumen protein-retaining receptor (214 aa).

Over 1 to 4 (MVFN) the chain is Lumenal. A helical transmembrane segment spans residues 5–23 (LFRISADLVHLLSIYFLLT). Topologically, residues 24 to 37 (KIISHKNCIGISLR) are cytoplasmic. The helical transmembrane segment at 38-55 (SQILFFIVWVTRYLDIFY) threads the bilayer. Over 56–63 (NFYSLYNT) the chain is Lumenal. A helical membrane pass occupies residues 64 to 82 (ILKIVYLTTSAYTIYLISK). The Cytoplasmic portion of the chain corresponds to 83–98 (RFRATYDKIHDTLNVW). A helical transmembrane segment spans residues 99 to 112 (YLIVPCIVLAFIFT). Topologically, residues 113–119 (EDYSITE) are lumenal. A helical transmembrane segment spans residues 120-139 (ICWTFSIFLEAVAILPQILL). Residues 140–151 (LRSTGEVENLNS) are Cytoplasmic-facing. Residues 152–170 (QYIFCLGLYRALYIINWIY) form a helical membrane-spanning segment. Over 171 to 181 (RYATEQSYWSP) the chain is Lumenal. A helical membrane pass occupies residues 182 to 202 (LTWICGSIQTLLYVEYFYYYI). At 203 to 214 (KSRVEGTKFVLP) the chain is on the cytoplasmic side.

The protein belongs to the ERD2 family.

It is found in the endoplasmic reticulum membrane. Its function is as follows. Required for the retention of luminal endoplasmic reticulum proteins. Determines the specificity of the luminal ER protein retention system. Also required for normal vesicular traffic through the Golgi. The sequence is that of ER lumen protein-retaining receptor from Entamoeba histolytica (strain ATCC 30459 / HM-1:IMSS / ABRM).